The chain runs to 95 residues: MSRDNKGRRIVVYPAYIDSKKSRSEGRKISLGKAVPNPSIKEIIEASERLGLNPLYEEKHYPRLKEGKGRVLVDKKSGKLEILRMIADEIRKMRG.

Belongs to the SRP19 family. Part of the signal recognition particle protein translocation system, which is composed of SRP and FtsY. Archaeal SRP consists of a 7S RNA molecule of 300 nucleotides and two protein subunits: SRP54 and SRP19.

The protein resides in the cytoplasm. Its function is as follows. Involved in targeting and insertion of nascent membrane proteins into the cytoplasmic membrane. Binds directly to 7S RNA and mediates binding of the 54 kDa subunit of the SRP. In Desulfurococcus amylolyticus (strain DSM 18924 / JCM 16383 / VKM B-2413 / 1221n) (Desulfurococcus kamchatkensis), this protein is Signal recognition particle 19 kDa protein.